The sequence spans 256 residues: Floral homeotic protein APETALA 1 (256 aa).

The 61-residue stretch at 1–61 (MGRGRVQLKR…GKLFEYSTDS (61 aa)) folds into the MADS-box domain. Residues 88–178 (NTNWSMEYNR…SKQIKEREKV (91 aa)) form the K-box domain. Residues 180–206 (RAQQEQWDQQNHGQNMPPPPPPQEHQI) form a disordered region.

In terms of assembly, homodimer capable of binding to CArG-box sequences.

The protein resides in the nucleus. Its function is as follows. Transcription factor that promotes early floral meristem identity in synergy with LEAFY. Displays a redundant function with CAULIFLOWER in the up-regulation of LEAFY. Required subsequently for the transition of an inflorescence meristem into a floral meristem, and for the normal development of sepals and petals in flowers. Regulates positively B class homeotic proteins. The chain is Floral homeotic protein APETALA 1 (AP1) from Brassica rapa subsp. pekinensis (Chinese cabbage).